The chain runs to 787 residues: Pyridoxal-dependent decarboxylase domain-containing protein 1 (787 aa).

The segment covering 26-44 (MLEKSPRRTEEENGKKPVS) has biased composition (basic and acidic residues). A disordered region spans residues 26–52 (MLEKSPRRTEEENGKKPVSEDIPGPLQ). Ser652 is modified (phosphoserine). A disordered region spans residues 682-787 (QGTGVTPPPT…SQVEELERLR (106 aa)). Thr687 and Thr691 each carry phosphothreonine. Phosphoserine is present on residues Ser710, Ser718, Ser722, and Ser748. A compositionally biased stretch (basic and acidic residues) spans 725 to 748 (HIEDLEKVEQLSSGLEHDNLEAHS). Polar residues predominate over residues 759–771 (TARQTEALQNQAQ). The segment covering 772–787 (HQEDDHSQVEELERLR) has biased composition (basic and acidic residues). Ser778 carries the phosphoserine modification.

It belongs to the group II decarboxylase family. It depends on pyridoxal 5'-phosphate as a cofactor.

The polypeptide is Pyridoxal-dependent decarboxylase domain-containing protein 1 (Pdxdc1) (Mus musculus (Mouse)).